The sequence spans 461 residues: Proton extrusion protein PxcA (461 aa).

Transmembrane regions (helical) follow at residues 244 to 264 (FMLL…ALIV), 339 to 359 (LKNI…VFTG), 386 to 406 (IILF…EVLV), and 421 to 441 (FINM…KYWI).

Belongs to the CemA family.

It is found in the cell inner membrane. In terms of biological role, required for H(+) efflux immediately after light irradiation to form a rapid H(+) concentration gradient across the thylakoid membranes. Together with PxcL, contributes to transient H(+) uptake following dark to light transition. This chain is Proton extrusion protein PxcA, found in Thermosynechococcus vestitus (strain NIES-2133 / IAM M-273 / BP-1).